The chain runs to 89 residues: Small ribosomal subunit protein uS15 (89 aa).

It belongs to the universal ribosomal protein uS15 family. In terms of assembly, part of the 30S ribosomal subunit. Forms a bridge to the 50S subunit in the 70S ribosome, contacting the 23S rRNA.

Its function is as follows. One of the primary rRNA binding proteins, it binds directly to 16S rRNA where it helps nucleate assembly of the platform of the 30S subunit by binding and bridging several RNA helices of the 16S rRNA. Functionally, forms an intersubunit bridge (bridge B4) with the 23S rRNA of the 50S subunit in the ribosome. This is Small ribosomal subunit protein uS15 from Laribacter hongkongensis (strain HLHK9).